Here is a 490-residue protein sequence, read N- to C-terminus: Cardiolipin synthase 1 (490 aa).

2 consecutive transmembrane segments (helical) span residues 9–29 (ILTI…FVII) and 42–62 (WAWL…YLFL). PLD phosphodiesterase domains are found at residues 225–252 (MNNR…GDDY) and 403–430 (QNGF…DFRS). Active-site residues include His230, Lys232, Asp237, His408, Lys410, and Asp415.

It belongs to the phospholipase D family. Cardiolipin synthase subfamily.

The protein resides in the cell membrane. It carries out the reaction 2 a 1,2-diacyl-sn-glycero-3-phospho-(1'-sn-glycerol) = a cardiolipin + glycerol. In terms of biological role, catalyzes the reversible phosphatidyl group transfer from one phosphatidylglycerol molecule to another to form cardiolipin (CL) (diphosphatidylglycerol) and glycerol. The chain is Cardiolipin synthase 1 (cls1) from Staphylococcus epidermidis (strain ATCC 12228 / FDA PCI 1200).